Consider the following 83-residue polypeptide: UPF0297 protein CLK_1948 (83 aa).

Belongs to the UPF0297 family.

In Clostridium botulinum (strain Loch Maree / Type A3), this protein is UPF0297 protein CLK_1948.